Reading from the N-terminus, the 528-residue chain is Protein MGF 505-7R (528 aa).

2 ANK repeats span residues 54–83 (SIND…NLHY) and 261–291 (NIHR…PPNT).

The protein belongs to the asfivirus MGF 505 family. Interacts with host STING1. Interacts with host JAK1; this interaction leads to JAK1 degradation. Interacts with host JAK2; this interaction leads to JAK2 degradation. Interacts with host RELA; this interaction inhibits NF-kappa-B promoter activity.

It is found in the host cytoplasm. Its function is as follows. Plays a role in virus cell tropism, and may be required for efficient virus replication in macrophages. Interferes with host NF-kappa-B promoter activity mediated by TLR8. Mechanistically, inhibits the phosphorylation and subsequent nuclear translocation of host NF-kappa-B RELA subunit downstream of TLR8. Promotes the expression of the autophagy-related protein host ULK1 to degrade host STING and inhibit the interferon response. Also inhibits JAK1- and JAK2-mediated signaling and thus negatively regulates the IFN-gamma signaling. This African swine fever virus (isolate Tick/Malawi/Lil 20-1/1983) (ASFV) protein is Protein MGF 505-7R.